The primary structure comprises 540 residues: Chaperonin GroEL (540 aa).

Residues 29-32 (TLGP), 86-90 (DGTTT), Gly413, 476-478 (NAA), and Asp492 contribute to the ATP site.

The protein belongs to the chaperonin (HSP60) family. In terms of assembly, forms a cylinder of 14 subunits composed of two heptameric rings stacked back-to-back. Interacts with the co-chaperonin GroES.

The protein localises to the cytoplasm. The enzyme catalyses ATP + H2O + a folded polypeptide = ADP + phosphate + an unfolded polypeptide.. Its function is as follows. Together with its co-chaperonin GroES, plays an essential role in assisting protein folding. The GroEL-GroES system forms a nano-cage that allows encapsulation of the non-native substrate proteins and provides a physical environment optimized to promote and accelerate protein folding. The sequence is that of Chaperonin GroEL from Streptococcus gordonii (strain Challis / ATCC 35105 / BCRC 15272 / CH1 / DL1 / V288).